The chain runs to 745 residues: Inhibitor of nuclear factor kappa-B kinase subunit alpha (745 aa).

One can recognise a Protein kinase domain in the interval 15–302; the sequence is WEMRERLGTG…LTLKQPRCFV (288 aa). ATP-binding positions include 21-29 and lysine 44; that span reads LGTGGFGNV. Threonine 23 carries the phosphothreonine; by PKB/AKT1 and SGK1 modification. Aspartate 144 (proton acceptor) is an active-site residue. Phosphoserine; by MAP3K14 is present on serine 176. At threonine 179 the chain carries (Microbial infection) O-acetylthreonine; by Yersinia YopJ. Serine 180 is modified (phosphoserine; by SGK1). The leucine-zipper stretch occupies residues 455 to 476; that stretch reads LLRYNANLTKMKNTLISASQQL. The tract at residues 738 to 743 is NEMO-binding; the sequence is LDWSWL.

Belongs to the protein kinase superfamily. Ser/Thr protein kinase family. I-kappa-B kinase subfamily. In terms of assembly, component of the I-kappa-B-kinase (IKK) core complex consisting of CHUK, IKBKB and IKBKG; probably four alpha/CHUK-beta/IKBKB dimers are associated with four gamma/IKBKG subunits. The IKK core complex seems to associate with regulatory or adapter proteins to form a IKK-signalosome holo-complex. The IKK complex associates with TERF2IP/RAP1, leading to promote IKK-mediated phosphorylation of RELA/p65. Part of a complex composed of NCOA2, NCOA3, CHUK/IKKA, IKBKB, IKBKG and CREBBP. Part of a 70-90 kDa complex at least consisting of CHUK/IKKA, IKBKB, NFKBIA, RELA, ELP1 and MAP3K14. Directly interacts with TRPC4AP. May interact with TRAF2. Interacts with NALP2. May interact with MAVS/IPS1. Interacts with ARRB1 and ARRB2. Interacts with NLRC5; prevents CHUK phosphorylation and kinase activity. Interacts with PIAS1; this interaction induces PIAS1 phosphorylation. Interacts with ZNF268 isoform 2; the interaction is further increased in a TNF-alpha-dependent manner. Interacts with FOXO3. Interacts with IFIT5; the interaction synergizes the recruitment of IKK to MAP3K7 and enhances IKK phosphorylation. Interacts with LRRC14. Interacts with SASH1. Directly interacts with DDX3X after the physiological activation of the TLR7 and TLR8 pathways; this interaction enhances CHUK autophosphorylation. (Microbial infection) Interacts with InlC of Listeria monocytogenes. Phosphorylated by MAP3K14/NIK, AKT and to a lesser extent by MEKK1, and dephosphorylated by PP2A. Autophosphorylated. In terms of processing, ubiquitinated by TRIM56 via 'Lys-63'-linked ubiquitination, promoting activation of CHUK/IKKA. Post-translationally, (Microbial infection) Acetylation of Thr-179 by Yersinia YopJ prevents phosphorylation and activation, thus blocking the I-kappa-B signaling pathway. In terms of tissue distribution, widely expressed.

It localises to the cytoplasm. Its subcellular location is the nucleus. The enzyme catalyses L-seryl-[I-kappa-B protein] + ATP = O-phospho-L-seryl-[I-kappa-B protein] + ADP + H(+). Activated when phosphorylated and inactivated when dephosphorylated. Functionally, serine kinase that plays an essential role in the NF-kappa-B signaling pathway which is activated by multiple stimuli such as inflammatory cytokines, bacterial or viral products, DNA damages or other cellular stresses. Acts as a part of the canonical IKK complex in the conventional pathway of NF-kappa-B activation and phosphorylates inhibitors of NF-kappa-B on serine residues. These modifications allow polyubiquitination of the inhibitors and subsequent degradation by the proteasome. In turn, free NF-kappa-B is translocated into the nucleus and activates the transcription of hundreds of genes involved in immune response, growth control, or protection against apoptosis. Negatively regulates the pathway by phosphorylating the scaffold protein TAXBP1 and thus promoting the assembly of the A20/TNFAIP3 ubiquitin-editing complex (composed of A20/TNFAIP3, TAX1BP1, and the E3 ligases ITCH and RNF11). Therefore, CHUK plays a key role in the negative feedback of NF-kappa-B canonical signaling to limit inflammatory gene activation. As part of the non-canonical pathway of NF-kappa-B activation, the MAP3K14-activated CHUK/IKKA homodimer phosphorylates NFKB2/p100 associated with RelB, inducing its proteolytic processing to NFKB2/p52 and the formation of NF-kappa-B RelB-p52 complexes. In turn, these complexes regulate genes encoding molecules involved in B-cell survival and lymphoid organogenesis. Also participates in the negative feedback of the non-canonical NF-kappa-B signaling pathway by phosphorylating and destabilizing MAP3K14/NIK. Within the nucleus, phosphorylates CREBBP and consequently increases both its transcriptional and histone acetyltransferase activities. Modulates chromatin accessibility at NF-kappa-B-responsive promoters by phosphorylating histones H3 at 'Ser-10' that are subsequently acetylated at 'Lys-14' by CREBBP. Additionally, phosphorylates the CREBBP-interacting protein NCOA3. Also phosphorylates FOXO3 and may regulate this pro-apoptotic transcription factor. Phosphorylates RIPK1 at 'Ser-25' which represses its kinase activity and consequently prevents TNF-mediated RIPK1-dependent cell death. Phosphorylates AMBRA1 following mitophagy induction, promoting AMBRA1 interaction with ATG8 family proteins and its mitophagic activity. The chain is Inhibitor of nuclear factor kappa-B kinase subunit alpha (CHUK) from Homo sapiens (Human).